A 137-amino-acid polypeptide reads, in one-letter code: Nuclear transition protein 2 (137 aa).

Residues 1–21 (MDTKTQSLPNAHTQPHSNSGP) are compositionally biased toward polar residues. Positions 1–137 (MDTKTQSLPN…KRRSSGRKYN (137 aa)) are disordered. Zn(2+) is bound by residues His-12, His-16, His-24, Cys-29, Cys-31, Cys-35, and Cys-38. The segment covering 22 to 74 (QSHACNQCSCSHHCQNCSQSCDRSQSCSRSRSSSQSPTGHRSLPGHQSQSLSP) has biased composition (low complexity). Residues 78-91 (PRHRKRAMHSHRCP) are compositionally biased toward basic residues. Positions 110 to 118 (GKANKRKGI) match the Nuclear localization signal motif. Residues 126–137 (KTKRRSSGRKYN) show a composition bias toward basic residues. Ser-132 is subject to Phosphoserine.

This sequence belongs to the nuclear transition protein 2 family. In terms of tissue distribution, testis. Expression is restricted to haploid germ cells.

It is found in the nucleus. The protein localises to the nucleolus. Its subcellular location is the chromosome. Functionally, plays a key role in the replacement of histones to protamine in the elongating spermatids of mammals. In condensing spermatids, loaded onto the nucleosomes, where it promotes the recruitment and processing of protamines, which are responsible for histone eviction. The polypeptide is Nuclear transition protein 2 (TNP2) (Sus scrofa (Pig)).